The chain runs to 85 residues: Probable oxaloacetate decarboxylase gamma chain (85 aa).

Residues 11–33 (AAALMVTGMGVVFIFLTILIFLV) traverse the membrane as a helical segment.

It belongs to the OadG family. In terms of assembly, heterotrimer of an alpha, a beta and a gamma subunit. It depends on Na(+) as a cofactor.

The protein localises to the cell membrane. The catalysed reaction is oxaloacetate + 2 Na(+)(in) + H(+) = pyruvate + 2 Na(+)(out) + CO2. Functionally, catalyzes the decarboxylation of oxaloacetate coupled to Na(+) translocation. The sequence is that of Probable oxaloacetate decarboxylase gamma chain from Vibrio vulnificus (strain CMCP6).